A 225-amino-acid polypeptide reads, in one-letter code: 2-C-methyl-D-erythritol 4-phosphate cytidylyltransferase (225 aa).

Belongs to the IspD/TarI cytidylyltransferase family. IspD subfamily.

The catalysed reaction is 2-C-methyl-D-erythritol 4-phosphate + CTP + H(+) = 4-CDP-2-C-methyl-D-erythritol + diphosphate. It participates in isoprenoid biosynthesis; isopentenyl diphosphate biosynthesis via DXP pathway; isopentenyl diphosphate from 1-deoxy-D-xylulose 5-phosphate: step 2/6. Catalyzes the formation of 4-diphosphocytidyl-2-C-methyl-D-erythritol from CTP and 2-C-methyl-D-erythritol 4-phosphate (MEP). The chain is 2-C-methyl-D-erythritol 4-phosphate cytidylyltransferase from Cereibacter sphaeroides (strain ATCC 17029 / ATH 2.4.9) (Rhodobacter sphaeroides).